The chain runs to 111 residues: ATP synthase subunit c (111 aa).

2 helical membrane passes run glycine 38–leucine 58 and alanine 89–valine 109.

The protein belongs to the ATPase C chain family. As to quaternary structure, F-type ATPases have 2 components, F(1) - the catalytic core - and F(0) - the membrane proton channel. F(1) has five subunits: alpha(3), beta(3), gamma(1), delta(1), epsilon(1). F(0) has three main subunits: a(1), b(2) and c(10-14). The alpha and beta chains form an alternating ring which encloses part of the gamma chain. F(1) is attached to F(0) by a central stalk formed by the gamma and epsilon chains, while a peripheral stalk is formed by the delta and b chains.

The protein localises to the cell membrane. Its function is as follows. F(1)F(0) ATP synthase produces ATP from ADP in the presence of a proton or sodium gradient. F-type ATPases consist of two structural domains, F(1) containing the extramembraneous catalytic core and F(0) containing the membrane proton channel, linked together by a central stalk and a peripheral stalk. During catalysis, ATP synthesis in the catalytic domain of F(1) is coupled via a rotary mechanism of the central stalk subunits to proton translocation. In terms of biological role, key component of the F(0) channel; it plays a direct role in translocation across the membrane. A homomeric c-ring of between 10-14 subunits forms the central stalk rotor element with the F(1) delta and epsilon subunits. The sequence is that of ATP synthase subunit c from Mycoplasmopsis synoviae (strain 53) (Mycoplasma synoviae).